The sequence spans 140 residues: Coiled-coil domain-containing protein 126 (140 aa).

Residues 1–35 (MFRTISRKNMSQKLSFLLLVFGLIWGLMLLHYTLQ) form the signal peptide. Asparagine 110 carries an N-linked (GlcNAc...) asparagine glycan. A compositionally biased stretch (low complexity) spans 118–130 (NGTNGNLVPVTTN). Residues 118–140 (NGTNGNLVPVTTNKRTSVSGSVR) form a disordered region. Polar residues predominate over residues 131-140 (KRTSVSGSVR).

It is found in the secreted. This is Coiled-coil domain-containing protein 126 (Ccdc126) from Mus musculus (Mouse).